We begin with the raw amino-acid sequence, 211 residues long: MIYLKYNCPLTYLILLKLEGGKTVEEKTDAEQRNATSEEDTEIFENPGEGLEKATFAAGCFWGIEEAFRQIKGVVATAVGYSGGHFKRPTYEQVCTLDTGHAEAVRVIFDPEIVSYKTLLDVFWKIHDPTTKDRQGPDVGKQYRSVIFYHSDEQKAAALASKEELEKSGAFKNPVVTEIVPVSEFYMAEDYHQQYFEKKGFLQNIFRSFKK.

Residue Cys-60 is part of the active site.

It belongs to the MsrA Met sulfoxide reductase family.

It carries out the reaction L-methionyl-[protein] + [thioredoxin]-disulfide + H2O = L-methionyl-(S)-S-oxide-[protein] + [thioredoxin]-dithiol. The catalysed reaction is [thioredoxin]-disulfide + L-methionine + H2O = L-methionine (S)-S-oxide + [thioredoxin]-dithiol. In terms of biological role, has an important function as a repair enzyme for proteins that have been inactivated by oxidation. Catalyzes the reversible oxidation-reduction of methionine sulfoxide in proteins to methionine. The polypeptide is Peptide methionine sulfoxide reductase MsrA (Methanosarcina mazei (strain ATCC BAA-159 / DSM 3647 / Goe1 / Go1 / JCM 11833 / OCM 88) (Methanosarcina frisia)).